Here is a 139-residue protein sequence, read N- to C-terminus: Sec-independent protein translocase protein TatB (139 aa).

A helical membrane pass occupies residues 1 to 21; sequence MFDMGFLELMLIGVVALLVLG. Basic and acidic residues predominate over residues 66–86; the sequence is QQRKLDAGLGKVRDEVERHGD. Residues 66–139 are disordered; that stretch reads QQRKLDAGLG…APSAKDSNAP (74 aa).

The protein belongs to the TatB family. The Tat system comprises two distinct complexes: a TatABC complex, containing multiple copies of TatA, TatB and TatC subunits, and a separate TatA complex, containing only TatA subunits. Substrates initially bind to the TatABC complex, which probably triggers association of the separate TatA complex to form the active translocon.

The protein resides in the cell inner membrane. Its function is as follows. Part of the twin-arginine translocation (Tat) system that transports large folded proteins containing a characteristic twin-arginine motif in their signal peptide across membranes. Together with TatC, TatB is part of a receptor directly interacting with Tat signal peptides. TatB may form an oligomeric binding site that transiently accommodates folded Tat precursor proteins before their translocation. This is Sec-independent protein translocase protein TatB from Chromohalobacter salexigens (strain ATCC BAA-138 / DSM 3043 / CIP 106854 / NCIMB 13768 / 1H11).